Here is a 98-residue protein sequence, read N- to C-terminus: Integration host factor subunit alpha (98 aa).

The protein belongs to the bacterial histone-like protein family. As to quaternary structure, heterodimer of an alpha and a beta chain.

In terms of biological role, this protein is one of the two subunits of integration host factor, a specific DNA-binding protein that functions in genetic recombination as well as in transcriptional and translational control. The protein is Integration host factor subunit alpha of Acinetobacter baumannii (strain AB307-0294).